Reading from the N-terminus, the 387-residue chain is (S)-8-oxocitronellyl enol synthase (387 aa).

Residues 36-38 (TGI), 64-65 (RR), 82-83 (DI), 106-107 (SW), and Q140 each bind NADP(+). Residues K144 and Y177 contribute to the active site. Residues K144 and Y177 each contribute to the substrate site. NADP(+) is bound by residues Y177 and 211-213 (SMM).

Belongs to the short-chain dehydrogenases/reductases (SDR) family. Highly divergent. Expressed in leaves.

It catalyses the reaction (S)-8-oxocitronellyl enol + NADP(+) = (6E)-8-oxogeranial + NADPH + H(+). It carries out the reaction (S)-8-oxocitronellyl enol + NAD(+) = (6E)-8-oxogeranial + NADH + H(+). The catalysed reaction is (R)-8-oxocitronellyl enol + NADP(+) = (6E)-8-oxogeranial + NADPH + H(+). Iridoid synthase that catalyzes the first step in generation of the iridoid ring scaffold using the linear monoterpene (6E)-8-oxogeranial as substrate. Reduces 8-oxogeranial, generating an unstable product that is subsequently cyclized into several possible products, either non-enzymically or by dedicated cyclases. Iridoids comprise a large family of distinctive bicyclic monoterpenes that possess a wide range of pharmacological activities, including anticancer, anti-inflammatory, antifungal and antibacterial activities. The sequence is that of (S)-8-oxocitronellyl enol synthase from Antirrhinum majus (Garden snapdragon).